A 183-amino-acid chain; its full sequence is Dual-action ribosomal maturation protein DarP (183 aa).

This sequence belongs to the DarP family.

Its subcellular location is the cytoplasm. Member of a network of 50S ribosomal subunit biogenesis factors which assembles along the 30S-50S interface, preventing incorrect 23S rRNA structures from forming. Promotes peptidyl transferase center (PTC) maturation. The chain is Dual-action ribosomal maturation protein DarP from Escherichia coli O6:H1 (strain CFT073 / ATCC 700928 / UPEC).